Here is a 237-residue protein sequence, read N- to C-terminus: Purine nucleoside phosphorylase DeoD-type (237 aa).

Residue H4 coordinates a purine D-ribonucleoside. Phosphate-binding positions include G20, R24, R43, and 87–90 (RVGT). A purine D-ribonucleoside-binding positions include 179–181 (EME) and 203–204 (SD). Residue D204 is the Proton donor of the active site.

The protein belongs to the PNP/UDP phosphorylase family. As to quaternary structure, homohexamer; trimer of homodimers.

The catalysed reaction is a purine D-ribonucleoside + phosphate = a purine nucleobase + alpha-D-ribose 1-phosphate. The enzyme catalyses a purine 2'-deoxy-D-ribonucleoside + phosphate = a purine nucleobase + 2-deoxy-alpha-D-ribose 1-phosphate. Functionally, catalyzes the reversible phosphorolytic breakdown of the N-glycosidic bond in the beta-(deoxy)ribonucleoside molecules, with the formation of the corresponding free purine bases and pentose-1-phosphate. In Exiguobacterium sp. (strain ATCC BAA-1283 / AT1b), this protein is Purine nucleoside phosphorylase DeoD-type.